The sequence spans 325 residues: Phosphate acyltransferase (325 aa).

Belongs to the PlsX family. As to quaternary structure, homodimer. Probably interacts with PlsY.

It localises to the cytoplasm. It catalyses the reaction a fatty acyl-[ACP] + phosphate = an acyl phosphate + holo-[ACP]. Its pathway is lipid metabolism; phospholipid metabolism. In terms of biological role, catalyzes the reversible formation of acyl-phosphate (acyl-PO(4)) from acyl-[acyl-carrier-protein] (acyl-ACP). This enzyme utilizes acyl-ACP as fatty acyl donor, but not acyl-CoA. This chain is Phosphate acyltransferase, found in Staphylococcus epidermidis (strain ATCC 12228 / FDA PCI 1200).